The following is a 381-amino-acid chain: MSRETTTEATPLILTDGGGGRRSVRRQGLREAARLLRHASSGRMMMREPSMLVREAAAEQLEERQSDWAYSKPVVVLDFVWNLAFVVVATAVLVLSSDENPNMPLRVWIIGYGLQCMMHMVCVCVEYRRRNSRRRRDLSPRSSSSSSSSSSSMDEEEGLGLSRNSDERYLELGQLENENNSFAKHLESANTMISFIWWVIGFYWVSSGGQELAQGSPQLYWLCIVFLGFDVFFVVFCVALACVIGIAVCCCLPCIIAVLYAVAEQEGASKEDIDQLTKFKFRKVGDTMKHTVDEEQGQGDSGGVMTECGTDSPVEHALPHEDAECCICLSAYEDETELRELPCGHHFHCGCVDKWLYINATCPLCKYNILKSSNYEEGEEV.

The disordered stretch occupies residues 1-23; sequence MSRETTTEATPLILTDGGGGRRS. 2 consecutive transmembrane segments (helical) span residues 74–94 and 107–127; these read VVVLDFVWNLAFVVVATAVLV and VWIIGYGLQCMMHMVCVCVEY. Residues 135-161 form a disordered region; the sequence is RRDLSPRSSSSSSSSSSSMDEEEGLGL. A compositionally biased stretch (low complexity) spans 140–152; it reads PRSSSSSSSSSSS. Positions 170 to 194 form a coiled coil; the sequence is LELGQLENENNSFAKHLESANTMIS. The next 3 helical transmembrane spans lie at 189–209, 224–244, and 245–265; these read ANTMISFIWWVIGFYWVSSGG, IVFLGFDVFFVVFCVALACVI, and GIAVCCCLPCIIAVLYAVAEQ. The RING-type; atypical zinc-finger motif lies at 325–366; that stretch reads CCICLSAYEDETELRELPCGHHFHCGCVDKWLYINATCPLCK.

It localises to the membrane. The enzyme catalyses S-ubiquitinyl-[E2 ubiquitin-conjugating enzyme]-L-cysteine + [acceptor protein]-L-lysine = [E2 ubiquitin-conjugating enzyme]-L-cysteine + N(6)-ubiquitinyl-[acceptor protein]-L-lysine.. The protein operates within protein modification; protein ubiquitination. Functionally, mediates E2-dependent protein ubiquitination. This is E3 ubiquitin-protein ligase At1g63170 from Arabidopsis thaliana (Mouse-ear cress).